A 263-amino-acid chain; its full sequence is (E)-2-((N-methylformamido)methylene)succinate hydrolase (263 aa).

Serine 96 acts as the Nucleophile in catalysis. Active-site residues include asparagine 120 and histidine 241.

This sequence belongs to the AB hydrolase superfamily. Monomer.

The enzyme catalyses (E)-2-((N-methylformamido) methylene)succinate + 2 H2O + H(+) = succinate semialdehyde + methylamine + formate + CO2. Its function is as follows. Involved in the degradation of the pyridine ring of trigonelline (TG; N-methylnicotinate) into succinate and methylamine as carbon and nitrogen sources, respectively. Catalyzes the hydrolysis of (E)-2-((N-methylformamido)methylene)succinate (MFMS) into formic acid, succinate semialdehyde (SSA), methylamine and carbon dioxide. This is (E)-2-((N-methylformamido)methylene)succinate hydrolase from Acinetobacter baylyi (strain ATCC 33305 / BD413 / ADP1).